The following is a 149-amino-acid chain: Small ribosomal subunit protein uS13 (149 aa).

A disordered region spans residues 118-149; sequence GRRHELGLPVRGQRTKSTFRKGSSVGVRRKKR.

It belongs to the universal ribosomal protein uS13 family. Part of the 30S ribosomal subunit. Forms a loose heterodimer with protein S19. Forms two bridges to the 50S subunit in the 70S ribosome.

Functionally, located at the top of the head of the 30S subunit, it contacts several helices of the 16S rRNA. In the 70S ribosome it contacts the 23S rRNA (bridge B1a) and protein L5 of the 50S subunit (bridge B1b), connecting the 2 subunits; these bridges are implicated in subunit movement. The protein is Small ribosomal subunit protein uS13 of Methanothermobacter thermautotrophicus (strain ATCC 29096 / DSM 1053 / JCM 10044 / NBRC 100330 / Delta H) (Methanobacterium thermoautotrophicum).